A 682-amino-acid chain; its full sequence is L-type lectin-domain containing receptor kinase VI.2 (682 aa).

Residues 1–26 (MGTQRSMFIVSFLFKLFLFLSVHVRA) form the signal peptide. At 27–310 (QRTTTNFAFR…AKKEGLNSQV (284 aa)) the chain is on the extracellular side. The legume-lectin like stretch occupies residues 29-277 (TTTNFAFRGF…AHYVMGWSFS (249 aa)). A helical transmembrane segment spans residues 311 to 331 (IVMIVALSAVMLVMLVLLFFF). Residues 332 to 682 (VMYKKRLGQE…RVSSTSRISQ (351 aa)) are Cytoplasmic-facing. Positions 367 to 641 (FKKTGIIGTG…LRYLNGEENV (275 aa)) constitute a Protein kinase domain. Residues 373-381 (IGTGGFGTV) and lysine 395 contribute to the ATP site. Catalysis depends on aspartate 494, which acts as the Proton acceptor.

This sequence in the C-terminal section; belongs to the protein kinase superfamily. Ser/Thr protein kinase family. It in the N-terminal section; belongs to the leguminous lectin family. In terms of tissue distribution, strongly expressed in the vascular system and trichomes of the leaves. Also expressed in guard cells, anthers, stigmas and germinating seeds, but not found in petals or roots. Increased susceptibility to the bacteria Pseudomonas syringae, characterized by stronger necrotic symptoms and higher bacterial proliferation.

The protein resides in the cell membrane. It carries out the reaction L-seryl-[protein] + ATP = O-phospho-L-seryl-[protein] + ADP + H(+). The catalysed reaction is L-threonyl-[protein] + ATP = O-phospho-L-threonyl-[protein] + ADP + H(+). Its function is as follows. Involved in negative regulation of abscisic acid response in seed germination. In terms of biological role, involved in resistance response to the pathogenic bacteria Pseudomonas syringae. The polypeptide is L-type lectin-domain containing receptor kinase VI.2 (Arabidopsis thaliana (Mouse-ear cress)).